The sequence spans 89 residues: Small ribosomal subunit protein uS15 (89 aa).

This sequence belongs to the universal ribosomal protein uS15 family. As to quaternary structure, part of the 30S ribosomal subunit. Forms a bridge to the 50S subunit in the 70S ribosome, contacting the 23S rRNA.

One of the primary rRNA binding proteins, it binds directly to 16S rRNA where it helps nucleate assembly of the platform of the 30S subunit by binding and bridging several RNA helices of the 16S rRNA. In terms of biological role, forms an intersubunit bridge (bridge B4) with the 23S rRNA of the 50S subunit in the ribosome. This chain is Small ribosomal subunit protein uS15, found in Mycobacterium sp. (strain JLS).